A 133-amino-acid chain; its full sequence is Napin-1 (133 aa).

2 consecutive propeptides follow at residues 31-49 (PSWTLDGEFDFEDDMEKQG) and 131-133 (PSY).

The protein belongs to the 2S seed storage albumins family. The mature protein consists of a small and a large chain linked by disulfide bonds. As to expression, cotyledons and the axis.

The small, basic, water-soluble napins are one of the two major kinds of storage proteins synthesized in the seed during its maturation. The sequence is that of Napin-1 from Brassica napus (Rape).